A 655-amino-acid polypeptide reads, in one-letter code: Sphingomyelin phosphodiesterase 3 (655 aa).

Over 1-10 (MVLYTTPFPN) the chain is Cytoplasmic. The segment at residues 11 to 31 (SCLSALHAVSWALIFPCYWLV) is an intramembrane region (helical). The Cytoplasmic segment spans residues 32–64 (DRLVASFIPTTYEKRQRADDPCYLQLFCTVLFT). S-palmitoyl cysteine attachment occurs at residues Cys53 and Cys59. An intramembrane region (helical) is located at residues 65–85 (PVYLALLVAALPFAFLGFIFW). The Cytoplasmic segment spans residues 86–655 (SPLQSARRPY…LMVSAGEEEA (570 aa)). Position 178 is a phosphoserine (Ser178). Disordered regions lie at residues 209–237 (VEYK…DGSL) and 250–320 (GGRA…SNSK). The span at 211 to 221 (YKGDGGRHPSD) shows a compositional bias: basic and acidic residues. Position 289 is a phosphoserine (Ser289). Position 362 (Glu362) interacts with Mg(2+). 2 S-palmitoyl cysteine lipidation sites follow: Cys395 and Cys396. Residue His639 is the Proton acceptor of the active site.

It belongs to the neutral sphingomyelinase family. Requires Mg(2+) as cofactor. In terms of processing, palmitoylated, palmitoylation-deficient proteins are targeted for lysosomal degradation. In brain sections, it is restricted to neurons and especially prominent in large cells, including Purkinje cells, pyramidal cells, neurons of the dentate gyrus granular layer, and neurons in the pontine nuclei. Also present in the hypothalamic nuclei, neurons in the piriform cortex, and nuclei of the brainstem (at protein level). Mainly expressed in brain and jejunum. Weakly or not expressed in heart, spleen, lung, liver, kidney and testis.

It is found in the golgi apparatus membrane. The protein resides in the cell membrane. It carries out the reaction a sphingomyelin + H2O = phosphocholine + an N-acylsphing-4-enine + H(+). The enzyme catalyses N-(15Z-tetracosenoyl)sphing-4-enine-1-phosphocholine + H2O = N-(15Z-tetracosenoyl)-sphing-4-enine + phosphocholine + H(+). The catalysed reaction is N-(tetracosanoyl)-sphing-4-enine-1-phosphocholine + H2O = N-tetracosanoyl-sphing-4-enine + phosphocholine + H(+). It catalyses the reaction an N-(acyl)-sphingosylphosphocholine + H2O = an N-acyl-sphingoid base + phosphocholine + H(+). It carries out the reaction 1-hexadecanoyl-sn-glycero-3-phosphocholine + H2O = 1-hexadecanoyl-sn-glycerol + phosphocholine + H(+). The enzyme catalyses 1-O-octadecyl-sn-glycero-3-phosphocholine + H2O = 1-O-octadecyl-sn-glycerol + phosphocholine + H(+). The catalysed reaction is a sphingosylphosphocholine + H2O = a sphingoid base + phosphocholine + H(+). It catalyses the reaction N-(hexadecanoyl)-sphing-4-enine-1-phosphocholine + H2O = N-hexadecanoylsphing-4-enine + phosphocholine + H(+). It participates in lipid metabolism; sphingolipid metabolism. Inhibited by nSMase inhibitor GW4869. Binding of anionic phospholipids (APLs) such as phosphatidylserine (PS) and phosphatidic acid (PA) increases enzymatic activity. In terms of biological role, catalyzes the hydrolysis of sphingomyelin to form ceramide and phosphocholine. Ceramide mediates numerous cellular functions, such as apoptosis and growth arrest, and is capable of regulating these 2 cellular events independently. Also hydrolyzes sphingosylphosphocholine. Binds to anionic phospholipids (APLs) such as phosphatidylserine (PS) and phosphatidic acid (PA) that modulate enzymatic activity and subcellular location. Regulates the cell cycle by acting as a growth suppressor in confluent cells. Acts as a regulator of postnatal development and participates in bone and dentin mineralization. May be involved in IL-1-beta-induced JNK activation in hepatocytes. May act as a mediator in transcriptional regulation of NOS2/iNOS via the NF-kappa-B activation under inflammatory conditions. This chain is Sphingomyelin phosphodiesterase 3, found in Rattus norvegicus (Rat).